We begin with the raw amino-acid sequence, 942 residues long: Sucrose synthase 6 (942 aa).

The interval 281–759 is GT-B glycosyltransferase; that stretch reads TVFNVVIFSV…GLKRIYECYT (479 aa). The tract at residues 830–862 is disordered; sequence TTNLGAGSKQKEVTETEKTKQKSKDGQEQHDVK. Basic and acidic residues predominate over residues 838-862; sequence KQKEVTETEKTKQKSKDGQEQHDVK.

The protein belongs to the glycosyltransferase 1 family. Plant sucrose synthase subfamily. As to expression, detected in the whole plant but more precisely confined to the vasculature in cotyledons, leaves, petals, anthers and roots.

Its subcellular location is the secreted. The protein resides in the cell wall. The catalysed reaction is an NDP-alpha-D-glucose + D-fructose = a ribonucleoside 5'-diphosphate + sucrose + H(+). Sucrose-cleaving enzyme that provides UDP-glucose and fructose for various metabolic pathways. Functions in callose synthesis at the site of phloem sieve elements. This Arabidopsis thaliana (Mouse-ear cress) protein is Sucrose synthase 6 (SUS6).